Consider the following 182-residue polypeptide: Ribosome-recycling factor (182 aa).

This sequence belongs to the RRF family.

It is found in the cytoplasm. Responsible for the release of ribosomes from messenger RNA at the termination of protein biosynthesis. May increase the efficiency of translation by recycling ribosomes from one round of translation to another. The polypeptide is Ribosome-recycling factor (Prochlorococcus marinus (strain MIT 9215)).